Here is a 142-residue protein sequence, read N- to C-terminus: Large ribosomal subunit protein uL13 (142 aa).

Belongs to the universal ribosomal protein uL13 family. Part of the 50S ribosomal subunit.

Its function is as follows. This protein is one of the early assembly proteins of the 50S ribosomal subunit, although it is not seen to bind rRNA by itself. It is important during the early stages of 50S assembly. The sequence is that of Large ribosomal subunit protein uL13 from Hahella chejuensis (strain KCTC 2396).